A 611-amino-acid polypeptide reads, in one-letter code: DNA mismatch repair protein MutL (611 aa).

The protein belongs to the DNA mismatch repair MutL/HexB family.

This protein is involved in the repair of mismatches in DNA. It is required for dam-dependent methyl-directed DNA mismatch repair. May act as a 'molecular matchmaker', a protein that promotes the formation of a stable complex between two or more DNA-binding proteins in an ATP-dependent manner without itself being part of a final effector complex. The protein is DNA mismatch repair protein MutL of Rickettsia bellii (strain RML369-C).